The primary structure comprises 256 residues: Acetyl-coenzyme A carboxylase carboxyl transferase subunit alpha (256 aa).

In terms of domain architecture, CoA carboxyltransferase C-terminal spans 1–236; that stretch reads MTDVSRVLKE…KANLIEQITS (236 aa).

It belongs to the AccA family. Acetyl-CoA carboxylase is a heterohexamer composed of biotin carboxyl carrier protein (AccB), biotin carboxylase (AccC) and two subunits each of ACCase subunit alpha (AccA) and ACCase subunit beta (AccD).

Its subcellular location is the cytoplasm. The enzyme catalyses N(6)-carboxybiotinyl-L-lysyl-[protein] + acetyl-CoA = N(6)-biotinyl-L-lysyl-[protein] + malonyl-CoA. It participates in lipid metabolism; malonyl-CoA biosynthesis; malonyl-CoA from acetyl-CoA: step 1/1. Component of the acetyl coenzyme A carboxylase (ACC) complex. First, biotin carboxylase catalyzes the carboxylation of biotin on its carrier protein (BCCP) and then the CO(2) group is transferred by the carboxyltransferase to acetyl-CoA to form malonyl-CoA. The protein is Acetyl-coenzyme A carboxylase carboxyl transferase subunit alpha of Streptococcus pyogenes serotype M12 (strain MGAS2096).